The primary structure comprises 198 residues: MRQAGAIAELIEALRCLPGVGPKTAQRMTLHLLQRDRDAAGRLSEALRQALEKVGLCAQCRTLTEHSLCEYCASPGRDRSLLCIVESPAEVLAISRSTGYKGLFFVLNGRLSPLDGIGPEELGLDVLEQRLKDDGVAELILATNTTVEGEATAHYLSDMARRHGVRTTRIAHGIPFGGELEYVDGATLSHAFDGRKDF.

Residues 57 to 72 (CAQCRTLTEHSLCEYC) form a C4-type zinc finger. The Toprim domain maps to 80–175 (SLLCIVESPA…RTTRIAHGIP (96 aa)).

This sequence belongs to the RecR family.

May play a role in DNA repair. It seems to be involved in an RecBC-independent recombinational process of DNA repair. It may act with RecF and RecO. In Methylococcus capsulatus (strain ATCC 33009 / NCIMB 11132 / Bath), this protein is Recombination protein RecR.